We begin with the raw amino-acid sequence, 262 residues long: Thiazole synthase (262 aa).

K97 acts as the Schiff-base intermediate with DXP in catalysis. 1-deoxy-D-xylulose 5-phosphate is bound by residues G158, 185–186 (AG), and 207–208 (NT). Positions 243-262 (DKAQASTPTVGQPFWHSAEY) are disordered.

This sequence belongs to the ThiG family. As to quaternary structure, homotetramer. Forms heterodimers with either ThiH or ThiS.

It is found in the cytoplasm. It catalyses the reaction [ThiS sulfur-carrier protein]-C-terminal-Gly-aminoethanethioate + 2-iminoacetate + 1-deoxy-D-xylulose 5-phosphate = [ThiS sulfur-carrier protein]-C-terminal Gly-Gly + 2-[(2R,5Z)-2-carboxy-4-methylthiazol-5(2H)-ylidene]ethyl phosphate + 2 H2O + H(+). The protein operates within cofactor biosynthesis; thiamine diphosphate biosynthesis. Catalyzes the rearrangement of 1-deoxy-D-xylulose 5-phosphate (DXP) to produce the thiazole phosphate moiety of thiamine. Sulfur is provided by the thiocarboxylate moiety of the carrier protein ThiS. In vitro, sulfur can be provided by H(2)S. The protein is Thiazole synthase of Neisseria meningitidis serogroup A / serotype 4A (strain DSM 15465 / Z2491).